Here is a 108-residue protein sequence, read N- to C-terminus: Trissin (108 aa).

The N-terminal stretch at 1 to 29 is a signal peptide; the sequence is MTKTTMHWLAHFQIILLCIWLMCPPSSQA. 3 disulfides stabilise this stretch: Cys-32-Cys-43, Cys-35-Cys-52, and Cys-39-Cys-51. Positions 57–108 are excised as a propeptide; it reads RKRSDPDALRQSSNRRLIDFILLQGRALFTQELRERRHNGTLMDLGLNTYYP.

The protein resides in the secreted. Its function is as follows. Activates the G-protein coupled receptor TrissinR in vitro, leading to increased intracellular calcium ion levels. The sequence is that of Trissin from Drosophila melanogaster (Fruit fly).